A 371-amino-acid chain; its full sequence is Putative transport protein YtvI (371 aa).

9 consecutive transmembrane segments (helical) span residues 6-26 (ITIFFRTLFVISMTAGSIAAA), 30-50 (FPLTYPFLIALILSSVIHPVV), 65-85 (VLGVLAFFLLAAFGVLTILVA), 168-188 (FFALLPNTAAVLIFSLLATFF), 225-245 (GFIKAQAVLVFITMVIVFIGL), 256-276 (IAFLIGLVDLLPYLGAGSVFV), 283-303 (SITGQLPQAIGIGILYLVVLI), 312-332 (ILSKSIGIDPLATLIALFAGF), and 334-354 (LFGFLGLIAGPAVLVIIQAFI).

The protein belongs to the autoinducer-2 exporter (AI-2E) (TC 2.A.86) family.

It is found in the cell membrane. The chain is Putative transport protein YtvI (ytvI) from Bacillus subtilis (strain 168).